The primary structure comprises 69 residues: Putative membrane protein insertion efficiency factor (69 aa).

It belongs to the UPF0161 family.

It is found in the cell inner membrane. In terms of biological role, could be involved in insertion of integral membrane proteins into the membrane. The chain is Putative membrane protein insertion efficiency factor from Geobacter sulfurreducens (strain ATCC 51573 / DSM 12127 / PCA).